Reading from the N-terminus, the 381-residue chain is E3 ubiquitin-protein ligase RNF13 (381 aa).

The first 34 residues, 1–34, serve as a signal peptide directing secretion; sequence MLLSIGMLMLSATQVYTILTVQLFAFLNLLPVEA. The Lumenal portion of the chain corresponds to 35–182; the sequence is DILAYNFENA…VPEFSLPLEY (148 aa). The PA domain occupies 65–160; that stretch reads KGFLINSKPE…GESSANSLKD (96 aa). Residue N88 is glycosylated (N-linked (GlcNAc...) asparagine). A helical membrane pass occupies residues 183–203; that stretch reads YLIPFLIIVGICLILIVIFMI. Over 204–381 the chain is Cytoplasmic; that stretch reads TKFVQDRHRA…ERDYNIANTV (178 aa). The segment at 240–282 adopts an RING-type; atypical zinc-finger fold; that stretch reads CAICLDEYEDGDKLRILPCSHAYHCKCVDPWLTKTKKTCPVCK. A disordered region spans residues 285 to 381; sequence VVPSQGDSDS…ERDYNIANTV (97 aa). 2 stretches are compositionally biased toward acidic residues: residues 292 to 304 and 339 to 357; these read SDSDTDSSQEENE and SDYEEDDNEDTDSSDAENE.

In terms of assembly, interacts with ERN1. In terms of processing, autoubiquitinated. In terms of tissue distribution, widely expressed (at protein level). In normal pancreas, expressed in islets, but not in ducts, nor in acini (at protein level).

The protein resides in the endoplasmic reticulum membrane. Its subcellular location is the late endosome membrane. It is found in the lysosome membrane. The protein localises to the nucleus inner membrane. It catalyses the reaction S-ubiquitinyl-[E2 ubiquitin-conjugating enzyme]-L-cysteine + [acceptor protein]-L-lysine = [E2 ubiquitin-conjugating enzyme]-L-cysteine + N(6)-ubiquitinyl-[acceptor protein]-L-lysine.. Its pathway is protein modification; protein ubiquitination. In terms of biological role, E3 ubiquitin-protein ligase that regulates cell proliferation. Involved in apoptosis regulation. Mediates ER stress-induced activation of JNK signaling pathway and apoptosis by promoting ERN1 activation and splicing of XBP1 mRNA. Also involved in protein trafficking and localization. This chain is E3 ubiquitin-protein ligase RNF13, found in Homo sapiens (Human).